The following is a 259-amino-acid chain: Protein N-terminal and lysine N-methyltransferase efm7 (259 aa).

S-adenosyl-L-methionine is bound by residues tryptophan 53, 80-82, aspartate 102, tryptophan 138, and alanine 164; that span reads GAA.

The protein belongs to the class I-like SAM-binding methyltransferase superfamily. EFM7 family.

The protein localises to the cytoplasm. Functionally, S-adenosyl-L-methionine-dependent protein methyltransferase that trimethylates the N-terminal glycine 'Gly-2' of elongation factor 1-alpha, before also catalyzing the mono- and dimethylation of 'Lys-3'. In Emericella nidulans (strain FGSC A4 / ATCC 38163 / CBS 112.46 / NRRL 194 / M139) (Aspergillus nidulans), this protein is Protein N-terminal and lysine N-methyltransferase efm7.